The chain runs to 332 residues: Ribosomal RNA small subunit methyltransferase H (332 aa).

S-adenosyl-L-methionine-binding positions include 36-38 (GGH), Asp-61, Phe-88, Asp-114, and Gln-121.

It belongs to the methyltransferase superfamily. RsmH family.

The protein resides in the cytoplasm. It catalyses the reaction cytidine(1402) in 16S rRNA + S-adenosyl-L-methionine = N(4)-methylcytidine(1402) in 16S rRNA + S-adenosyl-L-homocysteine + H(+). In terms of biological role, specifically methylates the N4 position of cytidine in position 1402 (C1402) of 16S rRNA. The sequence is that of Ribosomal RNA small subunit methyltransferase H from Pelodictyon phaeoclathratiforme (strain DSM 5477 / BU-1).